We begin with the raw amino-acid sequence, 382 residues long: Probable dual-specificity RNA methyltransferase RlmN (382 aa).

The active-site Proton acceptor is Glu118. The 247-residue stretch at 124-370 (YDKRVTMCIS…TTVRDTRGSD (247 aa)) folds into the Radical SAM core domain. Residues Cys131 and Cys375 are joined by a disulfide bond. The [4Fe-4S] cluster site is built by Cys138, Cys142, and Cys145. Residues 196 to 197 (GE), Ser230, 253 to 255 (SLH), and Asn332 contribute to the S-adenosyl-L-methionine site. The active-site S-methylcysteine intermediate is Cys375.

Belongs to the radical SAM superfamily. RlmN family. [4Fe-4S] cluster serves as cofactor.

It is found in the cytoplasm. The catalysed reaction is adenosine(2503) in 23S rRNA + 2 reduced [2Fe-2S]-[ferredoxin] + 2 S-adenosyl-L-methionine = 2-methyladenosine(2503) in 23S rRNA + 5'-deoxyadenosine + L-methionine + 2 oxidized [2Fe-2S]-[ferredoxin] + S-adenosyl-L-homocysteine. It catalyses the reaction adenosine(37) in tRNA + 2 reduced [2Fe-2S]-[ferredoxin] + 2 S-adenosyl-L-methionine = 2-methyladenosine(37) in tRNA + 5'-deoxyadenosine + L-methionine + 2 oxidized [2Fe-2S]-[ferredoxin] + S-adenosyl-L-homocysteine. In terms of biological role, specifically methylates position 2 of adenine 2503 in 23S rRNA and position 2 of adenine 37 in tRNAs. The polypeptide is Probable dual-specificity RNA methyltransferase RlmN (Kocuria rhizophila (strain ATCC 9341 / DSM 348 / NBRC 103217 / DC2201)).